The chain runs to 393 residues: Tryptophan 2,3-dioxygenase (393 aa).

Residues 56-60 and arginine 127 each bind substrate; that span reads FIVTH. A heme-binding site is contributed by histidine 312. Threonine 327 is a substrate binding site.

The protein belongs to the tryptophan 2,3-dioxygenase family. Homotetramer. Dimer of dimers. The cofactor is heme.

The enzyme catalyses L-tryptophan + O2 = N-formyl-L-kynurenine. Its pathway is amino-acid degradation; L-tryptophan degradation via kynurenine pathway; L-kynurenine from L-tryptophan: step 1/2. It participates in pigment biosynthesis; ommochrome biosynthesis. Its activity is regulated as follows. Stimulated by low concentrations of hydrogen peroxide (5 uM), ascorbate (0.1-0.3 mM), and sodium hydrosulfite (0.1 mM). Inhibited by high concentrations of hydrogen peroxide (0.1 mM), ascorbate (10 mM), and sodium hydrosulfite (1 mM). Functionally, heme-dependent dioxygenase that catalyzes the oxidative cleavage of the L-tryptophan (L-Trp) pyrrole ring and converts L-tryptophan to N-formyl-L-kynurenine. Catalyzes the oxidative cleavage of the indole moiety. This Aedes aegypti (Yellowfever mosquito) protein is Tryptophan 2,3-dioxygenase.